A 112-amino-acid polypeptide reads, in one-letter code: UPF0342 protein SSU05_1260 (112 aa).

The protein belongs to the UPF0342 family.

This is UPF0342 protein SSU05_1260 from Streptococcus suis (strain 05ZYH33).